We begin with the raw amino-acid sequence, 304 residues long: Ribosomal protein L11 methyltransferase (304 aa).

S-adenosyl-L-methionine-binding residues include Thr-156, Gly-177, Asp-199, and Asn-240.

It belongs to the methyltransferase superfamily. PrmA family.

Its subcellular location is the cytoplasm. It carries out the reaction L-lysyl-[protein] + 3 S-adenosyl-L-methionine = N(6),N(6),N(6)-trimethyl-L-lysyl-[protein] + 3 S-adenosyl-L-homocysteine + 3 H(+). In terms of biological role, methylates ribosomal protein L11. The chain is Ribosomal protein L11 methyltransferase from Symbiobacterium thermophilum (strain DSM 24528 / JCM 14929 / IAM 14863 / T).